The chain runs to 541 residues: Membrane protein insertase YidC (541 aa).

5 helical membrane-spanning segments follow: residues 7-27, 346-368, 416-436, 454-474, and 495-515; these read LLVIALLFISFLVYQQWQLDY, IVQNWGLAIIGVTLVVKAILYPL, LGGCLPILLQMPIFIALYWTF, LSAQDPYYILPILMGASMFLL, and PLIFMVFFLWFPSGLVLYWLV.

Belongs to the OXA1/ALB3/YidC family. Type 1 subfamily. As to quaternary structure, interacts with the Sec translocase complex via SecD. Specifically interacts with transmembrane segments of nascent integral membrane proteins during membrane integration.

It localises to the cell inner membrane. Its function is as follows. Required for the insertion and/or proper folding and/or complex formation of integral membrane proteins into the membrane. Involved in integration of membrane proteins that insert both dependently and independently of the Sec translocase complex, as well as at least some lipoproteins. Aids folding of multispanning membrane proteins. The protein is Membrane protein insertase YidC of Pasteurella multocida (strain Pm70).